The primary structure comprises 60 residues: Large ribosomal subunit protein bL32 (60 aa).

Positions 1–60 (MAVQQNKKTPSKRGMHRSHDFLVAPQLSVEQTTGETHMRHHISPNGFYRGRKVLKTKNDE) are disordered. Over residues 49-60 (RGRKVLKTKNDE) the composition is skewed to basic residues.

Belongs to the bacterial ribosomal protein bL32 family.

This Herminiimonas arsenicoxydans protein is Large ribosomal subunit protein bL32.